Here is a 529-residue protein sequence, read N- to C-terminus: uncharacterized protein (529 aa).

ATP contacts are provided by residues 178 to 186 (TSGTTGQPK), aspartate 401, arginine 416, and lysine 510.

It belongs to the ATP-dependent AMP-binding enzyme family.

This is an uncharacterized protein from Bacillus subtilis (strain 168).